Reading from the N-terminus, the 1222-residue chain is ATP-dependent helicase/nuclease subunit A (1222 aa).

The UvrD-like helicase ATP-binding domain maps to 39-495; that stretch reads QKRTAQQIEA…ILLKENFRSQ (457 aa). ATP is bound at residue 60–67; it reads ASAGSGKT. Residues 524-810 form the UvrD-like helicase C-terminal domain; the sequence is QLIAGSHAQT…NLMTIHKSKG (287 aa).

It belongs to the helicase family. AddA subfamily. As to quaternary structure, heterodimer of AddA and AddB/RexB. Mg(2+) is required as a cofactor.

The catalysed reaction is Couples ATP hydrolysis with the unwinding of duplex DNA by translocating in the 3'-5' direction.. The enzyme catalyses ATP + H2O = ADP + phosphate + H(+). In terms of biological role, the heterodimer acts as both an ATP-dependent DNA helicase and an ATP-dependent, dual-direction single-stranded exonuclease. Recognizes the chi site generating a DNA molecule suitable for the initiation of homologous recombination. The AddA nuclease domain is required for chi fragment generation; this subunit has the helicase and 3' -&gt; 5' nuclease activities. The sequence is that of ATP-dependent helicase/nuclease subunit A from Streptococcus pyogenes serotype M49 (strain NZ131).